We begin with the raw amino-acid sequence, 610 residues long: NTPase KAP family P-loop domain-containing protein 1 (610 aa).

The 414-residue stretch at 1-414 (MQQEAAQRES…NTVPITVRLL (414 aa)) folds into the KAP NTPase domain. Helical transmembrane passes span 22–42 (AVSG…QPII), 118–138 (VCLG…LLYL), and 157–177 (VFGG…VYSV). The disordered stretch occupies residues 540–587 (ALKPPSPPKSPTRDTPHAAHRANSASRAPPSGRASGQAGEGHHTGDLA). Over residues 560 to 575 (RANSASRAPPSGRASG) the composition is skewed to low complexity.

It is found in the membrane. This Homo sapiens (Human) protein is NTPase KAP family P-loop domain-containing protein 1 (NKPD1).